Consider the following 361-residue polypeptide: S-adenosylmethionine:tRNA ribosyltransferase-isomerase (361 aa).

The protein belongs to the QueA family. As to quaternary structure, monomer.

It localises to the cytoplasm. The catalysed reaction is 7-aminomethyl-7-carbaguanosine(34) in tRNA + S-adenosyl-L-methionine = epoxyqueuosine(34) in tRNA + adenine + L-methionine + 2 H(+). The protein operates within tRNA modification; tRNA-queuosine biosynthesis. Its function is as follows. Transfers and isomerizes the ribose moiety from AdoMet to the 7-aminomethyl group of 7-deazaguanine (preQ1-tRNA) to give epoxyqueuosine (oQ-tRNA). The polypeptide is S-adenosylmethionine:tRNA ribosyltransferase-isomerase (Actinobacillus pleuropneumoniae serotype 7 (strain AP76)).